Consider the following 413-residue polypeptide: Protein LAZY 1 (413 aa).

Residues 71 to 91 (FTFGGSGLLTIGTLGIAAVAV) form a helical membrane-spanning segment. Residues 103–124 (DADADSDFDDNDDTAGDDEDQV) show a composition bias toward acidic residues. Disordered stretches follow at residues 103 to 127 (DADADSDFDDNDDTAGDDEDQVDSA) and 261 to 308 (EDGG…ASAT). 2 consecutive short sequence motifs (nuclear localization signal) follow at residues 275–298 (RKAGKGGGGHKTTKKRSAKDEKVP) and 338–345 (KKSRKRGS).

Belongs to the LAZY family. As to expression, expressed in the node of the stem, initiating leaf founder cells, young leaf primordia, tips of axillary meristems, spikelet pair meristems of developing tassels and ears, male flower primordia, tassels, ears, silks and seeds. Expressed in leaf sheaths, leaf pulvinus and shoot apical meristem (SAM).

The protein resides in the cell membrane. It is found in the nucleus. Involved in the regulation of shoot gravitropism, and tassel and ear development through the regulation of polar auxin transport (PAT) and auxin signaling. Acts as a negative regulator of basipetal PAT, but positive regulator of lateral auxin transport. Involved in the regulation of shoot gravitropism and leaf angle through the regulation of cell development. The protein is Protein LAZY 1 of Zea mays (Maize).